The sequence spans 227 residues: Protein FAM3C (227 aa).

A signal peptide spans M1 to S24. Cystine bridges form between C58–C86 and C64–C221. Residues K67–K225 enclose the GG-type lectin domain.

Belongs to the FAM3 family.

It is found in the secreted. The protein localises to the cytoplasmic vesicle. May be involved in retinal laminar formation. Promotes epithelial to mesenchymal transition. This Rattus norvegicus (Rat) protein is Protein FAM3C (Fam3c).